The sequence spans 221 residues: Ubiquitin-conjugating enzyme E2 S (221 aa).

In terms of domain architecture, UBC core spans Gln11–Met157. The active-site Glycyl thioester intermediate is Cys95. The tract at residues Gly158–Leu221 is disordered. The span at Gly193 to Ile206 shows a compositional bias: low complexity. The segment covering Ala208–Leu221 has biased composition (basic residues).

The protein belongs to the ubiquitin-conjugating enzyme family.

It catalyses the reaction S-ubiquitinyl-[E1 ubiquitin-activating enzyme]-L-cysteine + [E2 ubiquitin-conjugating enzyme]-L-cysteine = [E1 ubiquitin-activating enzyme]-L-cysteine + S-ubiquitinyl-[E2 ubiquitin-conjugating enzyme]-L-cysteine.. The protein operates within protein modification; protein ubiquitination. Functionally, catalyzes the covalent attachment of ubiquitin to other proteins. Acts as an essential factor of the anaphase promoting complex/cyclosome (APC/C), a cell cycle-regulated ubiquitin ligase that controls progression through mitosis. Acts by specifically elongating 'Lys-11'-linked polyubiquitin chains initiated by the E2 enzyme ube2c/ubch10 on APC/C substrates, enhancing the degradation of APC/C substrates by the proteasome and promoting mitotic exit. The sequence is that of Ubiquitin-conjugating enzyme E2 S (ube2s) from Danio rerio (Zebrafish).